The chain runs to 474 residues: tRNA-2-methylthio-N(6)-dimethylallyladenosine synthase (474 aa).

Residues 3–120 (KKLHIKTWGC…LPEMIDQVQR (118 aa)) form the MTTase N-terminal domain. [4Fe-4S] cluster contacts are provided by C12, C49, C83, C157, C161, and C164. Residues 143 to 375 (RADGPTAFVS…QDRITQQAMR (233 aa)) form the Radical SAM core domain. One can recognise a TRAM domain in the interval 378 to 441 (RQMLGTVQRI…TNSLRGIFIR (64 aa)).

It belongs to the methylthiotransferase family. MiaB subfamily. Monomer. It depends on [4Fe-4S] cluster as a cofactor.

The protein resides in the cytoplasm. The catalysed reaction is N(6)-dimethylallyladenosine(37) in tRNA + (sulfur carrier)-SH + AH2 + 2 S-adenosyl-L-methionine = 2-methylsulfanyl-N(6)-dimethylallyladenosine(37) in tRNA + (sulfur carrier)-H + 5'-deoxyadenosine + L-methionine + A + S-adenosyl-L-homocysteine + 2 H(+). Functionally, catalyzes the methylthiolation of N6-(dimethylallyl)adenosine (i(6)A), leading to the formation of 2-methylthio-N6-(dimethylallyl)adenosine (ms(2)i(6)A) at position 37 in tRNAs that read codons beginning with uridine. This Shewanella denitrificans (strain OS217 / ATCC BAA-1090 / DSM 15013) protein is tRNA-2-methylthio-N(6)-dimethylallyladenosine synthase.